A 182-amino-acid chain; its full sequence is PRA1 family protein D (182 aa).

The residue at position 2 (Ala2) is an N-acetylalanine. A run of 3 helical transmembrane segments spans residues Leu68–Leu88, Ile107–Leu127, and Ala129–Thr149. The interval Pro163–Ile182 is disordered.

This sequence belongs to the PRA1 family. In terms of assembly, interacts with PRA1F2 and PRA1F3. Interacts with the cauliflower mosaic virus (CaMV) movement protein (via N-terminus). Expressed in hypocotyls, roots, lateral roots, lateral root caps, columella cells, leaves, shoot apex, stems and flowers.

The protein localises to the endosome membrane. Its function is as follows. May be involved in both secretory and endocytic intracellular trafficking in the endosomal/prevacuolar compartments. This chain is PRA1 family protein D (PRA1D), found in Arabidopsis thaliana (Mouse-ear cress).